The following is a 101-amino-acid chain: Small ribosomal subunit protein uS14 (101 aa).

Belongs to the universal ribosomal protein uS14 family. As to quaternary structure, part of the 30S ribosomal subunit. Contacts proteins S3 and S10.

In terms of biological role, binds 16S rRNA, required for the assembly of 30S particles and may also be responsible for determining the conformation of the 16S rRNA at the A site. The chain is Small ribosomal subunit protein uS14 from Bartonella bacilliformis (strain ATCC 35685 / KC583 / Herrer 020/F12,63).